A 612-amino-acid chain; its full sequence is MALVCGAPLASRSCLNKSLISSTHELKPLRRTILPTLRWKSATPSINMCLTTSNSVDAVQRRIANHHSNLWDDDFIQSLSTPYEAPSYRERAERLIGEVKEMFESMGPNNDLLQRLSMVESVERLGIDRHFKNEIKSALDYVYSHWNEKGIGCGRDSVVSDLNSTALALRTLRLHGYPVSSDVLEHFKDQKGRFACSSIKTEGEIRSLLNLFRASLVAFPNEKVMEEAEIFSTTYLKEAVQKIPVSSLSRQIEYNMEYGWHTNLPRLEARNYMGDMIHVMPYMNAEKLLELAKLEFNIFHSLQERELKHLSRWWKDSGFSQLTFVRHRHVEYYTLASCIDIDPKHSAFRLGFAKMCHLITVLDDIYDTFGTMDELKLFTAAIKRWDPSATEWLPEYMKGVYMVVYETVNEMAGEAKKSQGRDTINYARQAWEAYIDSYMKEAEWISSGCLPTFEEYYENGKVSFGYQISVLQPILTLDVPLPHHILQEIIFPSRFNGLASGILRLKGDTRCYQADRARGEEASCISCYMNDNPGATEEDALNHIHAMVNELMKEFNWELLKPDNNVPVSSKKHAFDITRAVHHGYKYRDGYSVANNEIKNLVITTVLEPVPL.

Residues 1–52 constitute a chloroplast transit peptide; it reads MALVCGAPLASRSCLNKSLISSTHELKPLRRTILPTLRWKSATPSINMCLTT. Mg(2+) contacts are provided by D363, D367, and D515. The short motif at 363-367 is the DDXXD motif element; that stretch reads DDIYD.

The protein belongs to the terpene synthase family. Tpsd subfamily. It depends on Mg(2+) as a cofactor. Mn(2+) is required as a cofactor.

The protein localises to the plastid. It localises to the chloroplast. The enzyme catalyses (2E)-geranyl diphosphate + H2O = 1,8-cineole + diphosphate. It functions in the pathway terpene metabolism; oleoresin biosynthesis. Terpene synthase (TPS) involved in the biosynthesis of monoterpene natural products included in conifer oleoresin secretions and volatile emissions; these compounds contribute to biotic and abiotic stress defense against herbivores and pathogens. Catalyzes the conversion of (2E)-geranyl diphosphate (GPP) to 1,8-cineole. The sequence is that of 1,8-cineole synthase, chloroplastic from Picea glauca (White spruce).